A 284-amino-acid polypeptide reads, in one-letter code: uncharacterized protein (284 aa).

Polar residues predominate over residues 1 to 10 (MSNSVTNFEM). Residues 1–28 (MSNSVTNFEMSSVLPGKKPCQGKNNESQ) form a disordered region.

This is an uncharacterized protein from Escherichia coli (strain K12).